The chain runs to 423 residues: D-tagatose-1,6-bisphosphate aldolase subunit GatZ (423 aa).

Belongs to the GatZ/KbaZ family. GatZ subfamily. Forms a complex with GatY.

It participates in carbohydrate metabolism; D-tagatose 6-phosphate degradation; D-glyceraldehyde 3-phosphate and glycerone phosphate from D-tagatose 6-phosphate: step 2/2. Its function is as follows. Component of the tagatose-1,6-bisphosphate aldolase GatYZ that is required for full activity and stability of the Y subunit. Could have a chaperone-like function for the proper and stable folding of GatY. When expressed alone, GatZ does not show any aldolase activity. Is involved in the catabolism of galactitol. The polypeptide is D-tagatose-1,6-bisphosphate aldolase subunit GatZ (Salmonella gallinarum (strain 287/91 / NCTC 13346)).